The chain runs to 272 residues: MNEWTPIAKKYDPLKAGSIDGTDEEPHDRAVLRAMLSRYVPNKGVTGDPHLTLFVSRLSPQTTEEKLKEVFSRYGDIKRIRLVRDFITGFSKGYAFIEYKQENAIMKAHRDANKLVIDQREVFVDFELERNLKGWIPRRFGGGFGGKKESGQLRFGGRDRPFRKPINLPVFPHQFNSESRGEKRHRSRSRDRSHDWRGQRRDYGRDRDRGIRRPEKERPYTKDDKEQNAEHTKRERSREQAKNDKDKEKKDSKRERSRERDYRKHRSDEHNR.

The region spanning L51–E129 is the RRM domain. 2 stretches are compositionally biased toward basic and acidic residues: residues G146 to F162 and R190 to R272. Residues G146–R272 form a disordered region. Residues T221 to R258 adopt a coiled-coil conformation.

The protein resides in the nucleus. This is U11/U12 small nuclear ribonucleoprotein 35 kDa protein (snrnp35) from Xenopus laevis (African clawed frog).